A 166-amino-acid chain; its full sequence is NAD(P)H-quinone oxidoreductase subunit I, chloroplastic (166 aa).

2 consecutive 4Fe-4S ferredoxin-type domains span residues 55-84 (GRIH…VDWK) and 95-124 (LNYS…MTEE). 8 residues coordinate [4Fe-4S] cluster: Cys-64, Cys-67, Cys-70, Cys-74, Cys-104, Cys-107, Cys-110, and Cys-114.

This sequence belongs to the complex I 23 kDa subunit family. NDH is composed of at least 16 different subunits, 5 of which are encoded in the nucleus. It depends on [4Fe-4S] cluster as a cofactor.

It localises to the plastid. The protein localises to the chloroplast thylakoid membrane. It carries out the reaction a plastoquinone + NADH + (n+1) H(+)(in) = a plastoquinol + NAD(+) + n H(+)(out). The enzyme catalyses a plastoquinone + NADPH + (n+1) H(+)(in) = a plastoquinol + NADP(+) + n H(+)(out). Its function is as follows. NDH shuttles electrons from NAD(P)H:plastoquinone, via FMN and iron-sulfur (Fe-S) centers, to quinones in the photosynthetic chain and possibly in a chloroplast respiratory chain. The immediate electron acceptor for the enzyme in this species is believed to be plastoquinone. Couples the redox reaction to proton translocation, and thus conserves the redox energy in a proton gradient. The protein is NAD(P)H-quinone oxidoreductase subunit I, chloroplastic of Tridax balbisioides (Coatbuttons).